The following is a 557-amino-acid chain: Urocanate hydratase (557 aa).

The tract at residues 1-20 (MSNPRHNEREVRSPRGDELN) is disordered. NAD(+)-binding positions include 52-53 (GG), Gln130, 176-178 (GMG), Glu196, Arg201, 242-243 (NA), 263-267 (QTSAH), 273-274 (YL), and Tyr322. Cys410 is an active-site residue. Residue Gly492 coordinates NAD(+).

This sequence belongs to the urocanase family. NAD(+) serves as cofactor.

Its subcellular location is the cytoplasm. It catalyses the reaction 4-imidazolone-5-propanoate = trans-urocanate + H2O. It participates in amino-acid degradation; L-histidine degradation into L-glutamate; N-formimidoyl-L-glutamate from L-histidine: step 2/3. Catalyzes the conversion of urocanate to 4-imidazolone-5-propionate. The sequence is that of Urocanate hydratase from Brucella anthropi (strain ATCC 49188 / DSM 6882 / CCUG 24695 / JCM 21032 / LMG 3331 / NBRC 15819 / NCTC 12168 / Alc 37) (Ochrobactrum anthropi).